Reading from the N-terminus, the 176-residue chain is MSKALDRIRIHTGDITKLDVDAIVNAANTLLLGGGGVDGAIHRAAGRELEVECRMLNGCKVGDAKITKGYKLPARHIIHTVGPVWQGGGKGEAELLASCYRSSLELAAANDCRSVAFPAISTGVYRYPKDEATGIAVGTVSMVIEEKAMPETVIFCCFDEQTAQLYLRAVAALRKG.

Residues 1–174 (MSKALDRIRI…LYLRAVAALR (174 aa)) form the Macro domain.

It belongs to the MacroD-type family.

This is Macro domain-containing protein mll7730 from Mesorhizobium japonicum (strain LMG 29417 / CECT 9101 / MAFF 303099) (Mesorhizobium loti (strain MAFF 303099)).